The primary structure comprises 564 residues: MVDSSRDSCFKAGKFSAPGFRFHPTDEELVVYYLKRKICCKKLRVNAIGVVDVYKVDPSELPGLSMLKTGDRQWFFFTPRNRKYPNAARSSRGTATGYWKATGKDRVIEYNSRSVGLKKTLVFYRGRAPNGERTDWVMHEYTMDEEELGRCKNAKEYYALYKLYKKSGAGPKNGEQYGAPFQEEEWVDSDSEDADSVAVPDYPVVRYENGPCVDDTKFCNPVKLQLEDIEKLLNEIPDAPGVNQRQFDEFVGVPQGNSAEVIQSTLLNNSSGEYIDPRTNGMFLPNGQLYNRDSSFQSHLNSFEATSGMAPLLDNEKEEYIEMNDLLIPELGASSTEKSTEFLNHGEFGDVNEYDQLFNDISVFQGTSTDLSCLSNFTNNTSGQRQQLLYEQFQYQTPENQLNNYMHPSTTLNQFTDNMWFKDDQAALYVQPPQSSSGAFTSQSTGVMPESMNPTMSVNPQYKEGQNGGGTRSQFSSALWELLESIPSTPASACEGPLNQTFVRMSSFSRIRFNGTSVTSRKVTVAKKRISNRGFLLLSIMGALCAIFWVFKATVGVMGRPLLS.

Positions 16–166 (SAPGFRFHPT…YYALYKLYKK (151 aa)) constitute an NAC domain. A DNA-binding region spans residues 115 to 172 (VGLKKTLVFYRGRAPNGERTDWVMHEYTMDEEELGRCKNAKEYYALYKLYKKSGAGPK). The helical transmembrane segment at 535 to 555 (FLLLSIMGALCAIFWVFKATV) threads the bilayer.

As to expression, expressed in roots, rosette leaves, shoot apex, stems and flowers.

The protein resides in the membrane. Its subcellular location is the nucleus. Its function is as follows. Transcriptional activator activated by proteolytic cleavage through regulated intramembrane proteolysis (RIP). Transcriptional activator that promotes leaf senescence by up-regulating senescence-associated genes in response to developmental and stress-induced senescence signals. Functions in salt and oxidative stress-responsive signaling pathways. Binds to the promoter of NAC029/NAP and NAC059/ORS1 genes. The sequence is that of NAC domain-containing protein 16 from Arabidopsis thaliana (Mouse-ear cress).